The sequence spans 1888 residues: E3 ubiquitin-protein ligase UPL3 (1888 aa).

The span at Met-1–Glu-10 shows a compositional bias: basic and acidic residues. The segment at Met-1–Ser-157 is disordered. The span at Leu-41 to Ser-81 shows a compositional bias: low complexity. Residues Asn-97 to Leu-124 are compositionally biased toward basic and acidic residues. The span at Asp-137–Asp-146 shows a compositional bias: acidic residues. ARM repeat units follow at residues Glu-227–Asp-267, Pro-270–Gln-310, His-312–Lys-349, and Leu-351–Glu-390. Disordered regions lie at residues Lys-660–Asn-711, Ala-970–Cys-1119, Asp-1134–Ala-1157, and Arg-1280–Gln-1307. Over residues Pro-986–Thr-1002 the composition is skewed to low complexity. The span at Thr-1019–Gly-1029 shows a compositional bias: basic and acidic residues. Residues Ser-1076–Asp-1113 are compositionally biased toward acidic residues. Low complexity-rich tracts occupy residues Ala-1148–Ala-1157 and Ala-1286–Ser-1303. The segment at Ala-1377 to Gly-1451 is K-box. Residues Met-1490–Ser-1888 enclose the HECT domain. Cys-1855 functions as the Glycyl thioester intermediate in the catalytic mechanism.

It belongs to the UPL family. K-HECT subfamily. In terms of tissue distribution, widely expressed.

It carries out the reaction S-ubiquitinyl-[E2 ubiquitin-conjugating enzyme]-L-cysteine + [acceptor protein]-L-lysine = [E2 ubiquitin-conjugating enzyme]-L-cysteine + N(6)-ubiquitinyl-[acceptor protein]-L-lysine.. It participates in protein modification; protein ubiquitination. Functionally, probable E3 ubiquitin-protein ligase which mediates ubiquitination and subsequent proteasomal degradation of target proteins. Involved in the repression of endoreduplication process and the cell morphogenesis in the trichomes. In Arabidopsis thaliana (Mouse-ear cress), this protein is E3 ubiquitin-protein ligase UPL3 (UPL3).